The following is a 507-amino-acid chain: 2,3-bisphosphoglycerate-independent phosphoglycerate mutase (507 aa).

Positions 11 and 61 each coordinate Mn(2+). Ser61 (phosphoserine intermediate) is an active-site residue. Residues His122, 150–151 (RD), Arg182, Arg188, 257–260 (RPDR), and Lys332 contribute to the substrate site. Mn(2+) is bound by residues Asp397, His401, Asp438, His439, and His456.

The protein belongs to the BPG-independent phosphoglycerate mutase family. As to quaternary structure, monomer. Mn(2+) serves as cofactor.

The enzyme catalyses (2R)-2-phosphoglycerate = (2R)-3-phosphoglycerate. The protein operates within carbohydrate degradation; glycolysis; pyruvate from D-glyceraldehyde 3-phosphate: step 3/5. Its function is as follows. Catalyzes the interconversion of 2-phosphoglycerate and 3-phosphoglycerate. In Mycoplasma genitalium (strain ATCC 33530 / DSM 19775 / NCTC 10195 / G37) (Mycoplasmoides genitalium), this protein is 2,3-bisphosphoglycerate-independent phosphoglycerate mutase.